The sequence spans 375 residues: Muconate cycloisomerase 1 (375 aa).

Lysine 171 (proton acceptor) is an active-site residue. Mn(2+)-binding residues include aspartate 200, glutamate 226, and aspartate 251. The active-site Proton donor is glutamate 329.

It belongs to the mandelate racemase/muconate lactonizing enzyme family. As to quaternary structure, homooctamer. Mn(2+) serves as cofactor.

It carries out the reaction (S)-muconolactone = cis,cis-muconate + H(+). It functions in the pathway aromatic compound metabolism; beta-ketoadipate pathway; 5-oxo-4,5-dihydro-2-furylacetate from catechol: step 2/3. In terms of biological role, catalyzes a syn cycloisomerization. The sequence is that of Muconate cycloisomerase 1 (catB) from Pseudomonas putida (Arthrobacter siderocapsulatus).